The following is a 460-amino-acid chain: EPD1-interacting receptor-like cytoplasmic serine/threonine-protein kinase 5D (460 aa).

Residues 83-364 (FSSANFLGEG…DVVNILEPLL (282 aa)) form the Protein kinase domain. Residues 89-97 (LGEGGFGPV) and Lys-118 contribute to the ATP site. Phosphotyrosine occurs at positions 163 and 165. The Proton acceptor role is filled by Asp-213.

This sequence belongs to the protein kinase superfamily. Ser/Thr protein kinase family. Interacts with the V.dahliae elicitor EPD1 (AC G2WWH6). Post-translationally, phosphorylated at Tyr-163 and Tyr-165 in the presence of pathogen-associated molecular patterns (PAMPs); this triggers the expression of pathogenesis-related genes. As to expression, mostly expressed in roots and, to a lesser extent, in leaves.

Its subcellular location is the cell membrane. It carries out the reaction L-seryl-[protein] + ATP = O-phospho-L-seryl-[protein] + ADP + H(+). The catalysed reaction is L-threonyl-[protein] + ATP = O-phospho-L-threonyl-[protein] + ADP + H(+). Required for pathogen-associated molecular pattern (PAMP, e.g. chitin and flg22)-triggered immunity (PTI) involving reactive oxygen species (ROS) accumulation and triggering plant defense, including defense-related gene expression (e.g. PR1 and LOX). Ensures specific recognition of the EPD1 effector of Verticillium dahliae, resulting in a hypersensitive response known as effector-triggered immunity (ETI), characterized by the activation of programmed cell death to limit infection by the pathogen. Priming plants with the incompatible pathogen V.dahliae leads to an increased resistance to compatible pathogens, as a result of systemic acquired resistance (SAR). This Gossypium barbadense (Sea Island cotton) protein is EPD1-interacting receptor-like cytoplasmic serine/threonine-protein kinase 5D.